Reading from the N-terminus, the 458-residue chain is Argininosuccinate lyase (458 aa).

Belongs to the lyase 1 family. Argininosuccinate lyase subfamily.

It localises to the cytoplasm. It carries out the reaction 2-(N(omega)-L-arginino)succinate = fumarate + L-arginine. It participates in amino-acid biosynthesis; L-arginine biosynthesis; L-arginine from L-ornithine and carbamoyl phosphate: step 3/3. The polypeptide is Argininosuccinate lyase (Buchnera aphidicola subsp. Baizongia pistaciae (strain Bp)).